Here is a 414-residue protein sequence, read N- to C-terminus: Ribulose bisphosphate carboxylase large chain (414 aa).

The substrate site is built by N101 and T151. K153 (proton acceptor) is an active-site residue. K155 lines the substrate pocket. Residues K179, D181, and E182 each coordinate Mg(2+). Position 179 is an N6-carboxylysine (K179). The active-site Proton acceptor is H272. Residues R273, H305, and S357 each contribute to the substrate site.

Belongs to the RuBisCO large chain family. Type I subfamily. In terms of assembly, heterohexadecamer of 8 large chains and 8 small chains; disulfide-linked. The disulfide link is formed within the large subunit homodimers. Mg(2+) serves as cofactor. The disulfide bond which can form in the large chain dimeric partners within the hexadecamer appears to be associated with oxidative stress and protein turnover.

It is found in the plastid. The protein resides in the chloroplast. The enzyme catalyses 2 (2R)-3-phosphoglycerate + 2 H(+) = D-ribulose 1,5-bisphosphate + CO2 + H2O. It catalyses the reaction D-ribulose 1,5-bisphosphate + O2 = 2-phosphoglycolate + (2R)-3-phosphoglycerate + 2 H(+). RuBisCO catalyzes two reactions: the carboxylation of D-ribulose 1,5-bisphosphate, the primary event in carbon dioxide fixation, as well as the oxidative fragmentation of the pentose substrate in the photorespiration process. Both reactions occur simultaneously and in competition at the same active site. In Onychium japonicum (Japanese claw fern), this protein is Ribulose bisphosphate carboxylase large chain (rbcL).